A 224-amino-acid chain; its full sequence is UPF0111 protein CT_691 (224 aa).

It belongs to the UPF0111 family.

This chain is UPF0111 protein CT_691, found in Chlamydia trachomatis serovar D (strain ATCC VR-885 / DSM 19411 / UW-3/Cx).